The primary structure comprises 159 residues: V-type proton ATPase 16 kDa proteolipid subunit c (159 aa).

Residues 1 to 11 (MSEEGSPMYSP) lie on the Lumenal side of the membrane. The helical transmembrane segment at 12–32 (FFGVMGAASAMVFSALGAAYG) threads the bilayer. Topologically, residues 33-54 (TAKSGVGISAMSVMRPELIMKC) are cytoplasmic. A helical membrane pass occupies residues 55–75 (IIPVVMAGIIAIYGLVVAVLI). The Lumenal segment spans residues 76 to 93 (AGKLDEAPTYTLYQGFVH). A helical transmembrane segment spans residues 94–114 (MGAGLSVGLSGLAAGFAIGIV). Over 115 to 132 (GDAGVRGTAQQPRLYVGM) the chain is Cytoplasmic. Residues 133 to 153 (ILILIFAEVLGLYGLIVAIFL) traverse the membrane as a helical segment. The Lumenal segment spans residues 154–159 (YTKTSS).

This sequence belongs to the V-ATPase proteolipid subunit family. As to quaternary structure, V-ATPase is a heteromultimeric enzyme made up of two complexes: the ATP-hydrolytic V1 complex and the proton translocation V0 complex. The V1 complex consists of three catalytic AB heterodimers that form a heterohexamer, three peripheral stalks each consisting of EG heterodimers, one central rotor including subunits D and F, and the regulatory subunits C and H. The proton translocation complex V0 consists of the proton transport subunit a, a ring of proteolipid subunits c9c'', rotary subunit d, subunits e and f, and two accessory subunits.

It localises to the vacuole membrane. Functionally, proton-conducting pore forming subunit of the V0 complex of vacuolar(H+)-ATPase (V-ATPase), a multisubunit enzyme composed of a peripheral complex (V1) that hydrolyzes ATP and a membrane integral complex (V0) that translocates protons. V-ATPase is responsible for acidifying and maintaining the pH of intracellular compartments and in some cell types, is targeted to the plasma membrane, where it is responsible for acidifying the extracellular environment. This Nephrops norvegicus (Norway lobster) protein is V-type proton ATPase 16 kDa proteolipid subunit c.